The primary structure comprises 69 residues: Putative membrane protein insertion efficiency factor (69 aa).

The protein belongs to the UPF0161 family.

It localises to the cell membrane. Could be involved in insertion of integral membrane proteins into the membrane. The sequence is that of Putative membrane protein insertion efficiency factor from Clostridium kluyveri (strain NBRC 12016).